We begin with the raw amino-acid sequence, 322 residues long: MLQGHERSITQIKYNREGDLLFSSSKDQKPNVWYSLNGERLGTYDGHQGAVWCLDVDWESRKLITAGGDMTAKLWDVEYGTVIASIPTKSSVRTCNFSFSGNQAAYSTDKTMGQSCELFIIDVRNADSTLSEQTPTLRIPMTESKITSMLWGPLDETIITGHDNGNIAIWDVRKGQKVVDSGTDHTGVINDMQLSKDGTMFVTASKDATAKLFDSETLMCLKTYKTERPVNSAAISPILDHVVLGGGQDAMEVTTTSTKAGKFDSRFFHLIYEEEFARLKGHFGPINSLAFHPDGKSYASGGEDGFVRVQSFDSTYFENIFE.

5 WD repeats span residues 4-43, 46-85, 141-180, 184-223, and 281-322; these read GHER…RLGT, GHQG…VIAS, MTES…KVVD, DHTG…CLKT, and GHFG…NIFE.

It belongs to the eIF-3 subunit I family. Component of the eukaryotic translation initiation factor 3 (eIF-3) complex. The eIF-3 complex interacts with pix.

It is found in the cytoplasm. In terms of biological role, component of the eukaryotic translation initiation factor 3 (eIF-3) complex, which is involved in protein synthesis of a specialized repertoire of mRNAs and, together with other initiation factors, stimulates binding of mRNA and methionyl-tRNAi to the 40S ribosome. The eIF-3 complex specifically targets and initiates translation of a subset of mRNAs involved in cell proliferation. The chain is Eukaryotic translation initiation factor 3 subunit I from Drosophila willistoni (Fruit fly).